We begin with the raw amino-acid sequence, 624 residues long: Probable potassium transport system protein Kup (624 aa).

Helical transmembrane passes span 13–33 (LALGALGVVFGDIGTSPLYTM), 52–72 (ILSLIFWALILVVSLKYVLVI), 102–122 (WIIMSLGFLGASLFFGDSLIT), 139–159 (PALHPFILPLALGILVGLFAI), 170–190 (LFGPIMLLWFAVLGVLGAIGI), 208–228 (FFMTHGTAGFLILGAVVLAIT), 249–269 (WFGFVLPALVVNYFGQGALLL), 291–311 (MVALATAATVIASQAVISGAF), 339–359 (IYIPFVNWTLAAGVALLVLGF), 368–388 (AYGIAVTATFAIDTVLLALLM), 399–419 (TLVAAALFLTLDLAFFGANAV), and 421–441 (IPEGGWFPLVVAVVVFTILVT).

It belongs to the HAK/KUP transporter (TC 2.A.72) family.

The protein resides in the cell inner membrane. The enzyme catalyses K(+)(in) + H(+)(in) = K(+)(out) + H(+)(out). Its function is as follows. Transport of potassium into the cell. Likely operates as a K(+):H(+) symporter. This Thiobacillus denitrificans (strain ATCC 25259 / T1) protein is Probable potassium transport system protein Kup.